We begin with the raw amino-acid sequence, 318 residues long: Olfactory receptor 2A2 (318 aa).

Residues 1–24 lie on the Extracellular side of the membrane; sequence MEGNQTWITDITLLGFQVGPALAI. The N-linked (GlcNAc...) asparagine glycan is linked to asparagine 4. A helical membrane pass occupies residues 25-48; sequence LLCGLFSVFYTLTLLGNGVIFGII. The Cytoplasmic segment spans residues 49–56; sequence CLDSKLHT. The helical transmembrane segment at 57–78 threads the bilayer; sequence PMYFFLSHLAIIDMSYASNNVP. Residues 79-99 lie on the Extracellular side of the membrane; sequence KMLANLMNQKRTISFVPCIMQ. Residues 100-119 form a helical membrane-spanning segment; sequence TFLYLAFAVTECLILVVMSY. Over 120 to 138 the chain is Cytoplasmic; the sequence is DRYVAICHPFQYTVIMSWR. Residues 139–157 traverse the membrane as a helical segment; that stretch reads VCTILVLTSWSCGFALSLV. At 158–194 the chain is on the extracellular side; the sequence is HEILLLRLPFCGPRDVNHLFCEILSVLKLACADTWVN. Residues 195–218 traverse the membrane as a helical segment; that stretch reads QVVIFATCVFVLVGPLSLILVSYM. Over 219–235 the chain is Cytoplasmic; it reads HILGAILKIQTKEGRIK. Residues 236 to 258 form a helical membrane-spanning segment; it reads AFSTCSSHLCVVGLFFGIAMVVY. Residues 259-271 are Extracellular-facing; the sequence is MVPDSNQREEQEK. A helical membrane pass occupies residues 272–291; it reads MLSLFHSVFNPMLNPLIYSL. At 292–310 the chain is on the cytoplasmic side; that stretch reads RNAQLKGALHRALQRKRSM.

The protein belongs to the G-protein coupled receptor 1 family.

It is found in the cell membrane. Its function is as follows. Odorant receptor. This is Olfactory receptor 2A2 (OR2A2) from Homo sapiens (Human).